Here is a 144-residue protein sequence, read N- to C-terminus: MNFKYIVAVSFLIASAYARSEENDEQSLSQRDVLEEESLREIRGIGTKIIGGLKTAVKGALKELASTYVNGKRTAEDHEVMKRLEAVMRDLDSLDYPEEASERETRGFNQEEIANLFTKKEKRILGPVISTIGGVLGGLLKNLG.

An N-terminal signal peptide occupies residues 1–18; that stretch reads MNFKYIVAVSFLIASAYA. Positions 19–43 are excised as a propeptide; sequence RSEENDEQSLSQRDVLEEESLREIR. Asparagine 70 is subject to Asparagine amide. Residues 74-123 constitute a propeptide that is removed on maturation; the sequence is TAEDHEVMKRLEAVMRDLDSLDYPEEASERETRGFNQEEIANLFTKKEKR. Residue leucine 143 is modified to Leucine amide.

The protein belongs to the bombinin family. In terms of tissue distribution, expressed by the skin glands.

It localises to the secreted. Its function is as follows. Maximin-11 shows antimicrobial activity against bacteria and against the fungus C.albicans. It has little hemolytic activity. Maximin-H1 shows antibacterial activity against both Gram-positive and Gram-negative bacteria. It also shows antimicrobial activity against the fungus C.albicans. Shows strong hemolytic activity. The sequence is that of Maximins 11/H1 from Bombina maxima (Giant fire-bellied toad).